The following is a 238-amino-acid chain: MRPAGRSNNQVRPVTLTRNYTKHAEGSVLVEFGDTKVLCTASIEEGVPRFLKGQGQGWITAEYGMLPRSTHTRNAREAAKGKQGGRTMEIQRLIARALRAAVDLKALGEFTITLDCDVLQADGGTRTASITGACVALADALQKLVENGKLKTNPMKGMVAAVSVGIVNGEAVCDLEYVEDSAAETDMNVVMTEDGRIIEVQGTAEGEPFTHEELLTLLALARGGIESIVATQKAALAN.

Residues arginine 86 and 124 to 126 each bind phosphate; that span reads GTR.

Belongs to the RNase PH family. Homohexameric ring arranged as a trimer of dimers.

The enzyme catalyses tRNA(n+1) + phosphate = tRNA(n) + a ribonucleoside 5'-diphosphate. Functionally, phosphorolytic 3'-5' exoribonuclease that plays an important role in tRNA 3'-end maturation. Removes nucleotide residues following the 3'-CCA terminus of tRNAs; can also add nucleotides to the ends of RNA molecules by using nucleoside diphosphates as substrates, but this may not be physiologically important. Probably plays a role in initiation of 16S rRNA degradation (leading to ribosome degradation) during starvation. The polypeptide is Ribonuclease PH (Shigella boydii serotype 18 (strain CDC 3083-94 / BS512)).